The chain runs to 150 residues: Large ribosomal subunit protein bL9 (150 aa).

The protein belongs to the bacterial ribosomal protein bL9 family.

Its function is as follows. Binds to the 23S rRNA. In Moorella thermoacetica (strain ATCC 39073 / JCM 9320), this protein is Large ribosomal subunit protein bL9.